The primary structure comprises 380 residues: UDP-3-O-acylglucosamine N-acyltransferase (380 aa).

Residue His263 is the Proton acceptor of the active site.

Belongs to the transferase hexapeptide repeat family. LpxD subfamily. Homotrimer.

It catalyses the reaction a UDP-3-O-[(3R)-3-hydroxyacyl]-alpha-D-glucosamine + a (3R)-hydroxyacyl-[ACP] = a UDP-2-N,3-O-bis[(3R)-3-hydroxyacyl]-alpha-D-glucosamine + holo-[ACP] + H(+). It functions in the pathway bacterial outer membrane biogenesis; LPS lipid A biosynthesis. Catalyzes the N-acylation of UDP-3-O-acylglucosamine using 3-hydroxyacyl-ACP as the acyl donor. Is involved in the biosynthesis of lipid A, a phosphorylated glycolipid that anchors the lipopolysaccharide to the outer membrane of the cell. This Rhodopirellula baltica (strain DSM 10527 / NCIMB 13988 / SH1) protein is UDP-3-O-acylglucosamine N-acyltransferase.